A 175-amino-acid polypeptide reads, in one-letter code: Co-chaperone protein HscB homolog (175 aa).

A J domain is found at 2–74 (NYFQLFNIEV…LQRAEYILVQ (73 aa)).

The protein belongs to the HscB family. As to quaternary structure, interacts with HscA and stimulates its ATPase activity.

Its function is as follows. Co-chaperone involved in the maturation of iron-sulfur cluster-containing proteins. Seems to help targeting proteins to be folded toward HscA. The polypeptide is Co-chaperone protein HscB homolog (Colwellia psychrerythraea (strain 34H / ATCC BAA-681) (Vibrio psychroerythus)).